The primary structure comprises 250 residues: Isoprenyl transferase (250 aa).

Asp27 is a catalytic residue. Asp27 is a binding site for Mg(2+). Substrate is bound by residues 28–31 (GNRR), Trp32, His48, and 76–78 (STE). The active-site Proton acceptor is Asn79. Substrate contacts are provided by residues Phe80, Arg82, Arg199, and 205–207 (RVS). Residue Glu218 coordinates Mg(2+).

This sequence belongs to the UPP synthase family. Homodimer. Mg(2+) serves as cofactor.

Catalyzes the condensation of isopentenyl diphosphate (IPP) with allylic pyrophosphates generating different type of terpenoids. In Chlamydia pneumoniae (Chlamydophila pneumoniae), this protein is Isoprenyl transferase.